A 310-amino-acid chain; its full sequence is Thioredoxin reductase (310 aa).

35–42 (ERGMPGGQ) contributes to the FAD binding site. A disulfide bridge connects residues cysteine 134 and cysteine 137. 277–286 (DVRDKGLRQI) serves as a coordination point for FAD.

Belongs to the class-II pyridine nucleotide-disulfide oxidoreductase family. Homodimer. FAD serves as cofactor.

It localises to the cytoplasm. The enzyme catalyses [thioredoxin]-dithiol + NADP(+) = [thioredoxin]-disulfide + NADPH + H(+). The polypeptide is Thioredoxin reductase (trxB) (Staphylococcus epidermidis (strain ATCC 35984 / DSM 28319 / BCRC 17069 / CCUG 31568 / BM 3577 / RP62A)).